A 424-amino-acid chain; its full sequence is D-inositol 3-phosphate glycosyltransferase (424 aa).

Histidine 16 provides a ligand contact to 1D-myo-inositol 3-phosphate. UDP-N-acetyl-alpha-D-glucosamine is bound by residues 22–23 (QP) and glycine 30. 1D-myo-inositol 3-phosphate is bound by residues 27–32 (DAGGMN), lysine 85, tyrosine 118, threonine 142, and arginine 162. The UDP-N-acetyl-alpha-D-glucosamine site is built by arginine 240 and lysine 245. Residues methionine 313, arginine 314, and alanine 316 each contribute to the Mg(2+) site. UDP-N-acetyl-alpha-D-glucosamine contacts are provided by glutamate 326 and glutamate 334. Threonine 340 is a binding site for Mg(2+).

It belongs to the glycosyltransferase group 1 family. MshA subfamily. As to quaternary structure, homodimer.

The enzyme catalyses 1D-myo-inositol 3-phosphate + UDP-N-acetyl-alpha-D-glucosamine = 1D-myo-inositol 2-acetamido-2-deoxy-alpha-D-glucopyranoside 3-phosphate + UDP + H(+). In terms of biological role, catalyzes the transfer of a N-acetyl-glucosamine moiety to 1D-myo-inositol 3-phosphate to produce 1D-myo-inositol 2-acetamido-2-deoxy-glucopyranoside 3-phosphate in the mycothiol biosynthesis pathway. The sequence is that of D-inositol 3-phosphate glycosyltransferase from Jonesia denitrificans (strain ATCC 14870 / DSM 20603 / BCRC 15368 / CIP 55.134 / JCM 11481 / NBRC 15587 / NCTC 10816 / Prevot 55134) (Listeria denitrificans).